The sequence spans 179 residues: Large ribosomal subunit protein uL6 (179 aa).

The protein belongs to the universal ribosomal protein uL6 family. As to quaternary structure, part of the 50S ribosomal subunit.

In terms of biological role, this protein binds to the 23S rRNA, and is important in its secondary structure. It is located near the subunit interface in the base of the L7/L12 stalk, and near the tRNA binding site of the peptidyltransferase center. In Geobacter sulfurreducens (strain ATCC 51573 / DSM 12127 / PCA), this protein is Large ribosomal subunit protein uL6.